Here is a 367-residue protein sequence, read N- to C-terminus: tRNA 2-selenouridine synthase (367 aa).

The region spanning Phe-12–Glu-136 is the Rhodanese domain. Cys-95 serves as the catalytic S-selanylcysteine intermediate.

This sequence belongs to the SelU family. As to quaternary structure, monomer.

The catalysed reaction is 5-methylaminomethyl-2-thiouridine(34) in tRNA + selenophosphate + (2E)-geranyl diphosphate + H2O + H(+) = 5-methylaminomethyl-2-selenouridine(34) in tRNA + (2E)-thiogeraniol + phosphate + diphosphate. The enzyme catalyses 5-methylaminomethyl-2-thiouridine(34) in tRNA + (2E)-geranyl diphosphate = 5-methylaminomethyl-S-(2E)-geranyl-thiouridine(34) in tRNA + diphosphate. It catalyses the reaction 5-methylaminomethyl-S-(2E)-geranyl-thiouridine(34) in tRNA + selenophosphate + H(+) = 5-methylaminomethyl-2-(Se-phospho)selenouridine(34) in tRNA + (2E)-thiogeraniol. It carries out the reaction 5-methylaminomethyl-2-(Se-phospho)selenouridine(34) in tRNA + H2O = 5-methylaminomethyl-2-selenouridine(34) in tRNA + phosphate. Involved in the post-transcriptional modification of the uridine at the wobble position (U34) of tRNA(Lys), tRNA(Glu) and tRNA(Gln). Catalyzes the conversion of 2-thiouridine (S2U-RNA) to 2-selenouridine (Se2U-RNA). Acts in a two-step process involving geranylation of 2-thiouridine (S2U) to S-geranyl-2-thiouridine (geS2U) and subsequent selenation of the latter derivative to 2-selenouridine (Se2U) in the tRNA chain. The polypeptide is tRNA 2-selenouridine synthase (Pseudomonas fluorescens (strain Pf0-1)).